The sequence spans 484 residues: tRNA sulfurtransferase (484 aa).

Residues glutamate 63–arginine 167 enclose the THUMP domain. ATP contacts are provided by residues leucine 185 to isoleucine 186, lysine 267, glycine 289, and glutamine 298. A disulfide bond links cysteine 346 and cysteine 458. Residues isoleucine 406–proline 484 form the Rhodanese domain. Cysteine 458 (cysteine persulfide intermediate) is an active-site residue.

The protein belongs to the ThiI family.

It is found in the cytoplasm. It carries out the reaction [ThiI sulfur-carrier protein]-S-sulfanyl-L-cysteine + a uridine in tRNA + 2 reduced [2Fe-2S]-[ferredoxin] + ATP + H(+) = [ThiI sulfur-carrier protein]-L-cysteine + a 4-thiouridine in tRNA + 2 oxidized [2Fe-2S]-[ferredoxin] + AMP + diphosphate. The enzyme catalyses [ThiS sulfur-carrier protein]-C-terminal Gly-Gly-AMP + S-sulfanyl-L-cysteinyl-[cysteine desulfurase] + AH2 = [ThiS sulfur-carrier protein]-C-terminal-Gly-aminoethanethioate + L-cysteinyl-[cysteine desulfurase] + A + AMP + 2 H(+). It functions in the pathway cofactor biosynthesis; thiamine diphosphate biosynthesis. Functionally, catalyzes the ATP-dependent transfer of a sulfur to tRNA to produce 4-thiouridine in position 8 of tRNAs, which functions as a near-UV photosensor. Also catalyzes the transfer of sulfur to the sulfur carrier protein ThiS, forming ThiS-thiocarboxylate. This is a step in the synthesis of thiazole, in the thiamine biosynthesis pathway. The sulfur is donated as persulfide by IscS. The polypeptide is tRNA sulfurtransferase (Shewanella halifaxensis (strain HAW-EB4)).